Here is a 241-residue protein sequence, read N- to C-terminus: Methylthioribulose-1-phosphate dehydratase (241 aa).

Cysteine 96 is a substrate binding site. Zn(2+) contacts are provided by histidine 114 and histidine 116. The active-site Proton donor/acceptor is glutamate 138. Histidine 194 contributes to the Zn(2+) binding site.

This sequence belongs to the aldolase class II family. MtnB subfamily. Requires Zn(2+) as cofactor.

The protein localises to the cytoplasm. It carries out the reaction 5-(methylsulfanyl)-D-ribulose 1-phosphate = 5-methylsulfanyl-2,3-dioxopentyl phosphate + H2O. It participates in amino-acid biosynthesis; L-methionine biosynthesis via salvage pathway; L-methionine from S-methyl-5-thio-alpha-D-ribose 1-phosphate: step 2/6. Its function is as follows. Catalyzes the dehydration of methylthioribulose-1-phosphate (MTRu-1-P) into 2,3-diketo-5-methylthiopentyl-1-phosphate (DK-MTP-1-P). Functions in the methionine salvage pathway. May play a role in apoptosis. This is Methylthioribulose-1-phosphate dehydratase from Danio rerio (Zebrafish).